An 840-amino-acid chain; its full sequence is Protein translocase subunit SecA (840 aa).

Residues glutamine 87, 105 to 109, and aspartate 494 contribute to the ATP site; that span reads GEGKT. The tract at residues 518 to 537 is disordered; the sequence is RRIDNQLRGRSGRQGDPGSS. 4 residues coordinate Zn(2+): cysteine 826, cysteine 828, cysteine 837, and cysteine 838.

It belongs to the SecA family. As to quaternary structure, monomer and homodimer. Part of the essential Sec protein translocation apparatus which comprises SecA, SecYEG and auxiliary proteins SecDF-YajC and YidC. It depends on Zn(2+) as a cofactor.

The protein resides in the cell inner membrane. Its subcellular location is the cytoplasm. It carries out the reaction ATP + H2O + cellular proteinSide 1 = ADP + phosphate + cellular proteinSide 2.. Part of the Sec protein translocase complex. Interacts with the SecYEG preprotein conducting channel. Has a central role in coupling the hydrolysis of ATP to the transfer of proteins into and across the cell membrane, serving as an ATP-driven molecular motor driving the stepwise translocation of polypeptide chains across the membrane. The sequence is that of Protein translocase subunit SecA from Desulforapulum autotrophicum (strain ATCC 43914 / DSM 3382 / VKM B-1955 / HRM2) (Desulfobacterium autotrophicum).